The following is a 356-amino-acid chain: UDP-3-O-acylglucosamine N-acyltransferase (356 aa).

The active-site Proton acceptor is His242.

The protein belongs to the transferase hexapeptide repeat family. LpxD subfamily. In terms of assembly, homotrimer.

It catalyses the reaction a UDP-3-O-[(3R)-3-hydroxyacyl]-alpha-D-glucosamine + a (3R)-hydroxyacyl-[ACP] = a UDP-2-N,3-O-bis[(3R)-3-hydroxyacyl]-alpha-D-glucosamine + holo-[ACP] + H(+). It participates in bacterial outer membrane biogenesis; LPS lipid A biosynthesis. Functionally, catalyzes the N-acylation of UDP-3-O-acylglucosamine using 3-hydroxyacyl-ACP as the acyl donor. Is involved in the biosynthesis of lipid A, a phosphorylated glycolipid that anchors the lipopolysaccharide to the outer membrane of the cell. This chain is UDP-3-O-acylglucosamine N-acyltransferase, found in Acinetobacter baumannii (strain AB0057).